The following is a 518-amino-acid chain: Glutamate--cysteine ligase (518 aa).

Belongs to the glutamate--cysteine ligase type 1 family. Type 1 subfamily.

It carries out the reaction L-cysteine + L-glutamate + ATP = gamma-L-glutamyl-L-cysteine + ADP + phosphate + H(+). Its pathway is sulfur metabolism; glutathione biosynthesis; glutathione from L-cysteine and L-glutamate: step 1/2. This chain is Glutamate--cysteine ligase, found in Shigella boydii serotype 4 (strain Sb227).